A 272-amino-acid polypeptide reads, in one-letter code: Phosphate import ATP-binding protein PstB (272 aa).

The region spanning 18–257 (VSMQNVTISY…FNDTQSIFNS (240 aa)) is the ABC transporter domain. 50-57 (GPSGCGKS) contacts ATP.

This sequence belongs to the ABC transporter superfamily. Phosphate importer (TC 3.A.1.7) family. The complex is composed of two ATP-binding proteins (PstB), two transmembrane proteins (PstC and PstA) and a solute-binding protein (PstS).

The protein resides in the cell inner membrane. The catalysed reaction is phosphate(out) + ATP + H2O = ADP + 2 phosphate(in) + H(+). In terms of biological role, part of the ABC transporter complex PstSACB involved in phosphate import. Responsible for energy coupling to the transport system. This chain is Phosphate import ATP-binding protein PstB, found in Synechococcus sp. (strain CC9902).